The sequence spans 409 residues: Serine/threonine transporter SstT (409 aa).

The next 8 helical transmembrane spans lie at 24-44 (LALG…AGLF), 48-68 (FVGA…AATI), 82-102 (IIVL…IAGM), 142-162 (AIAN…GAAL), 194-214 (LGIF…ALAG), 218-238 (LLAV…PAIV), 292-312 (IPLG…VLAM), and 319-339 (GITV…VSAC).

The protein belongs to the dicarboxylate/amino acid:cation symporter (DAACS) (TC 2.A.23) family.

Its subcellular location is the cell inner membrane. It catalyses the reaction L-serine(in) + Na(+)(in) = L-serine(out) + Na(+)(out). The enzyme catalyses L-threonine(in) + Na(+)(in) = L-threonine(out) + Na(+)(out). In terms of biological role, involved in the import of serine and threonine into the cell, with the concomitant import of sodium (symport system). The protein is Serine/threonine transporter SstT of Neisseria meningitidis serogroup B (strain ATCC BAA-335 / MC58).